A 250-amino-acid chain; its full sequence is Triosephosphate isomerase (250 aa).

9–11 (NWK) contacts substrate. Residue His95 is the Electrophile of the active site. The active-site Proton acceptor is the Glu167. Substrate is bound by residues Gly173, Ser212, and 233–234 (GG).

It belongs to the triosephosphate isomerase family. Homodimer.

It localises to the cytoplasm. It catalyses the reaction D-glyceraldehyde 3-phosphate = dihydroxyacetone phosphate. Its pathway is carbohydrate biosynthesis; gluconeogenesis. It functions in the pathway carbohydrate degradation; glycolysis; D-glyceraldehyde 3-phosphate from glycerone phosphate: step 1/1. Functionally, involved in the gluconeogenesis. Catalyzes stereospecifically the conversion of dihydroxyacetone phosphate (DHAP) to D-glyceraldehyde-3-phosphate (G3P). This Endomicrobium trichonymphae protein is Triosephosphate isomerase.